A 213-amino-acid polypeptide reads, in one-letter code: Adenylate kinase (213 aa).

Position 10–15 (10–15 (GAGKGT)) interacts with ATP. The segment at 30-59 (STGDMFRAAMANQTEMGVLAKSYIDKGDLV) is NMP. Residues Thr31, Arg36, 57-59 (DLV), 86-89 (GYPR), and Gln93 contribute to the AMP site. Residues 127–160 (GRIINKKTGETFHKIFNPPVGDYKEEDFYQREDD) form an LID region. ATP-binding positions include Arg128 and 137–138 (TF). Positions 157 and 168 each coordinate AMP. Lys196 contacts ATP.

It belongs to the adenylate kinase family. As to quaternary structure, monomer.

The protein localises to the cytoplasm. It carries out the reaction AMP + ATP = 2 ADP. It participates in purine metabolism; AMP biosynthesis via salvage pathway; AMP from ADP: step 1/1. Catalyzes the reversible transfer of the terminal phosphate group between ATP and AMP. Plays an important role in cellular energy homeostasis and in adenine nucleotide metabolism. This Streptococcus equi subsp. zooepidemicus (strain H70) protein is Adenylate kinase.